A 200-amino-acid chain; its full sequence is Small ribosomal subunit protein eS8A (200 aa).

The disordered stretch occupies residues 1–31 (MGISRDSRHKRSATGAKRAQFRKKRKFELGR). Threonine 62 carries the post-translational modification Phosphothreonine. 4 positions are modified to phosphoserine: serine 66, serine 69, serine 73, and serine 86. Threonine 107 carries the post-translational modification Phosphothreonine. 4 positions are modified to phosphoserine: serine 154, serine 155, serine 158, and serine 161.

This sequence belongs to the eukaryotic ribosomal protein eS8 family. In terms of assembly, component of the small ribosomal subunit (SSU). Mature yeast ribosomes consist of a small (40S) and a large (60S) subunit. The 40S small subunit contains 1 molecule of ribosomal RNA (18S rRNA) and 33 different proteins (encoded by 57 genes). The large 60S subunit contains 3 rRNA molecules (25S, 5.8S and 5S rRNA) and 46 different proteins (encoded by 81 genes).

The protein resides in the cytoplasm. Functionally, component of the ribosome, a large ribonucleoprotein complex responsible for the synthesis of proteins in the cell. The small ribosomal subunit (SSU) binds messenger RNAs (mRNAs) and translates the encoded message by selecting cognate aminoacyl-transfer RNA (tRNA) molecules. The large subunit (LSU) contains the ribosomal catalytic site termed the peptidyl transferase center (PTC), which catalyzes the formation of peptide bonds, thereby polymerizing the amino acids delivered by tRNAs into a polypeptide chain. The nascent polypeptides leave the ribosome through a tunnel in the LSU and interact with protein factors that function in enzymatic processing, targeting, and the membrane insertion of nascent chains at the exit of the ribosomal tunnel. The chain is Small ribosomal subunit protein eS8A from Saccharomyces cerevisiae (strain ATCC 204508 / S288c) (Baker's yeast).